A 206-amino-acid polypeptide reads, in one-letter code: Large ribosomal subunit protein uL3 (206 aa).

The disordered stretch occupies residues 127-151 (SGGPSSHGSKFHRHLGGTGQATTPA).

Belongs to the universal ribosomal protein uL3 family. As to quaternary structure, part of the 50S ribosomal subunit. Forms a cluster with proteins L14 and L19.

In terms of biological role, one of the primary rRNA binding proteins, it binds directly near the 3'-end of the 23S rRNA, where it nucleates assembly of the 50S subunit. The protein is Large ribosomal subunit protein uL3 of Borreliella burgdorferi (strain ZS7) (Borrelia burgdorferi).